We begin with the raw amino-acid sequence, 231 residues long: 7-cyano-7-deazaguanine synthase (231 aa).

Phe8–Leu18 lines the ATP pocket. Zn(2+) is bound by residues Cys188, Cys197, Cys200, and Cys203.

It belongs to the QueC family. It depends on Zn(2+) as a cofactor.

It catalyses the reaction 7-carboxy-7-deazaguanine + NH4(+) + ATP = 7-cyano-7-deazaguanine + ADP + phosphate + H2O + H(+). Its pathway is purine metabolism; 7-cyano-7-deazaguanine biosynthesis. Functionally, catalyzes the ATP-dependent conversion of 7-carboxy-7-deazaguanine (CDG) to 7-cyano-7-deazaguanine (preQ(0)). The chain is 7-cyano-7-deazaguanine synthase from Enterobacter sp. (strain 638).